We begin with the raw amino-acid sequence, 233 residues long: Zinc import ATP-binding protein ZnuC (233 aa).

Positions 6 to 222 constitute an ABC transporter domain; sequence IEFHNVSKKF…SDFSNALSSL (217 aa). 38 to 45 contributes to the ATP binding site; the sequence is GPNGAGKT.

The protein belongs to the ABC transporter superfamily. Zinc importer (TC 3.A.1.15.5) family. As to quaternary structure, the complex is composed of two ATP-binding proteins (ZnuC), two transmembrane proteins (ZnuB) and a solute-binding protein (ZnuA).

The protein resides in the cell inner membrane. It carries out the reaction Zn(2+)(out) + ATP(in) + H2O(in) = Zn(2+)(in) + ADP(in) + phosphate(in) + H(+)(in). Functionally, part of the ABC transporter complex ZnuABC involved in zinc import. Responsible for energy coupling to the transport system. The protein is Zinc import ATP-binding protein ZnuC of Rickettsia bellii (strain RML369-C).